The following is a 926-amino-acid chain: OTU domain-containing protein 7A (926 aa).

Residues 75 to 99 (PHVFNEGRGPKQPEREPQPGHKVER) are disordered. Basic and acidic residues predominate over residues 82–99 (RGPKQPEREPQPGHKVER). At serine 119 the chain carries Phosphoserine. Residues 168–410 (ERDLIEQATM…AVDPGKDWEW (243 aa)) form a TRAF-binding region. Residues 183–449 (AGRLNWWSTV…VTWIRIPSET (267 aa)) are catalytic. Positions 199–374 (LLPLATTGDG…QAHFSALVSM (176 aa)) constitute an OTU domain. Aspartate 207 is an active-site residue. Cysteine 210 acts as the Nucleophile in catalysis. Histidine 367 serves as the catalytic Proton acceptor. Disordered stretches follow at residues 452–514 (PLAQ…DSVA), 537–613 (GLVH…DAWK), and 668–768 (EQEQ…APAR). The segment covering 481-491 (VCSNSNSNNGK) has biased composition (low complexity). Residues 492 to 510 (NGKDKEKEKQRKEKDKTRA) are compositionally biased toward basic and acidic residues. Positions 494–509 (KDKEKEKQRKEKDKTR) match the Nuclear localization signal motif. Low complexity-rich tracts occupy residues 576 to 592 (GASASTSPSEKTTPSPT), 677 to 691 (ATAAAAAAAAAAATA), and 729 to 742 (PAAGRAARAAAGGT). Omega-N-methylarginine is present on arginine 880. The A20-type zinc finger occupies 884 to 919 (GPVQRRCQRENCAFYGRAETEHYCSYCYREELRRRR). Zn(2+)-binding residues include cysteine 890, cysteine 895, cysteine 907, and cysteine 910.

The protein belongs to the peptidase C64 family.

It localises to the cytoplasm. It is found in the nucleus. The catalysed reaction is Thiol-dependent hydrolysis of ester, thioester, amide, peptide and isopeptide bonds formed by the C-terminal Gly of ubiquitin (a 76-residue protein attached to proteins as an intracellular targeting signal).. Functionally, deubiquitinase, which cleaves 'Lys-11'-linked polyubiquitin chains. Might be required for PA28-20S proteasome assembly. In Homo sapiens (Human), this protein is OTU domain-containing protein 7A (OTUD7A).